A 463-amino-acid chain; its full sequence is Cysteine--tRNA ligase (463 aa).

Cys-29 is a binding site for Zn(2+). The 'HIGH' region signature appears at 31 to 41 (ATPQTQPHIGH). Positions 212, 237, and 241 each coordinate Zn(2+). A 'KMSKS' region motif is present at residues 268-272 (KMSKS). Lys-271 serves as a coordination point for ATP.

This sequence belongs to the class-I aminoacyl-tRNA synthetase family. As to quaternary structure, monomer. Zn(2+) serves as cofactor.

It is found in the cytoplasm. The catalysed reaction is tRNA(Cys) + L-cysteine + ATP = L-cysteinyl-tRNA(Cys) + AMP + diphosphate. The polypeptide is Cysteine--tRNA ligase (Corynebacterium diphtheriae (strain ATCC 700971 / NCTC 13129 / Biotype gravis)).